A 58-amino-acid chain; its full sequence is Protein SHMOOSE (58 aa).

The interval 27 to 58 (FGATPNKSNNHAHYYNHPNPDFPNSPHPYHPR) is disordered. The segment covering 35–45 (NNHAHYYNHPN) has biased composition (low complexity). Residues 46-58 (PDFPNSPHPYHPR) show a composition bias toward pro residues.

In terms of assembly, interacts with IMMT/mitofilin. In terms of tissue distribution, detected in cerebrospinal fluid (at protein level).

It localises to the mitochondrion. The protein localises to the nucleus. In terms of biological role, increases neural cell metabolic activity and mitochondrial oxygen consumption rate. This Homo sapiens (Human) protein is Protein SHMOOSE.